Here is a 229-residue protein sequence, read N- to C-terminus: MYPMDRIQQKHARQIDLLENLTAVIQDYPNPACIRDETGKFIFCNTLFHESFLTQDQSAEKWLLSQRDFCELISVTEMEAYRNEHTHLNLVEDVFIQNRFWTISVQSFLNGHRNIILWQFYDAAHVRHKDSYNQKTIVSDDIRNIIRRMSDDSSVSSYVNDVFYLYSTGISHNAIARILNISISTSKKHASLICDYFSVSNKDELIILLYNKKFIYYLYEKAMCIINTR.

The protein resides in the cytoplasm. Functionally, this protein is essential for positively regulating the expression of transfer genes that are involved in the conjugal transfer of DNA between bacterial cells. The polypeptide is Protein TraJ (traJ) (Escherichia coli (strain K12)).